Reading from the N-terminus, the 155-residue chain is Cyclic pyranopterin monophosphate synthase (155 aa).

Residues 75 to 77 (LCH) and 111 to 112 (ME) each bind substrate. Asp126 is an active-site residue.

This sequence belongs to the MoaC family. In terms of assembly, homohexamer; trimer of dimers.

It catalyses the reaction (8S)-3',8-cyclo-7,8-dihydroguanosine 5'-triphosphate = cyclic pyranopterin phosphate + diphosphate. It functions in the pathway cofactor biosynthesis; molybdopterin biosynthesis. In terms of biological role, catalyzes the conversion of (8S)-3',8-cyclo-7,8-dihydroguanosine 5'-triphosphate to cyclic pyranopterin monophosphate (cPMP). This Corynebacterium efficiens (strain DSM 44549 / YS-314 / AJ 12310 / JCM 11189 / NBRC 100395) protein is Cyclic pyranopterin monophosphate synthase.